Consider the following 524-residue polypeptide: Phosphoenolpyruvate carboxykinase (ATP) (524 aa).

Substrate is bound by residues Arg-52, Tyr-188, and Lys-194. Residues Lys-194, His-213, and 229–237 each bind ATP; that span reads GLSGTGKTT. 2 residues coordinate Mn(2+): Lys-194 and His-213. A Mn(2+)-binding site is contributed by Asp-250. ATP is bound by residues Glu-278, Arg-314, and Thr-439. Substrate is bound at residue Arg-314.

This sequence belongs to the phosphoenolpyruvate carboxykinase (ATP) family. Requires Mn(2+) as cofactor.

Its subcellular location is the cytoplasm. It catalyses the reaction oxaloacetate + ATP = phosphoenolpyruvate + ADP + CO2. It participates in carbohydrate biosynthesis; gluconeogenesis. Involved in the gluconeogenesis. Catalyzes the conversion of oxaloacetate (OAA) to phosphoenolpyruvate (PEP) through direct phosphoryl transfer between the nucleoside triphosphate and OAA. This is Phosphoenolpyruvate carboxykinase (ATP) from Campylobacter jejuni subsp. doylei (strain ATCC BAA-1458 / RM4099 / 269.97).